A 165-amino-acid polypeptide reads, in one-letter code: Methyl-coenzyme M reductase II operon protein D (165 aa).

In terms of assembly, MCR is composed of three subunits: alpha, beta, and gamma. The function of protein D is not known.

The protein is Methyl-coenzyme M reductase II operon protein D (mrtD) of Methanothermus fervidus (strain ATCC 43054 / DSM 2088 / JCM 10308 / V24 S).